The chain runs to 296 residues: Cell division protein DivIB (296 aa).

Residues 1 to 29 (MTKEIPKINNEYLKEKRKKQRIQQRRVQR) lie on the Cytoplasmic side of the membrane. A helical membrane pass occupies residues 30–50 (MIVGILVVIVLLILVYMFTPI). The POTRA domain maps to 51–119 (SHIKSADIKG…NPIEVNVKEH (69 aa)). The Extracellular portion of the chain corresponds to 51–296 (SHIKSADIKG…NKIKDEESSE (246 aa)). Residues 256–273 (NNGQTSSASAKEVQSGTA) show a composition bias toward polar residues. The tract at residues 256-296 (NNGQTSSASAKEVQSGTASEDKAKDDLQKALNKIKDEESSE) is disordered. The segment covering 274-296 (SEDKAKDDLQKALNKIKDEESSE) has biased composition (basic and acidic residues).

This sequence belongs to the FtsQ/DivIB family. DivIB subfamily.

It localises to the cell membrane. Functionally, cell division protein that may be involved in stabilizing or promoting the assembly of the division complex. The chain is Cell division protein DivIB from Staphylococcus pseudintermedius (strain HKU10-03).